A 271-amino-acid polypeptide reads, in one-letter code: Short-chain type dehydrogenase/reductase (271 aa).

25–49 lines the NAD(+) pocket; that stretch reads IVTGASRGIGREIALNMAEKGAKVV. Serine 166 serves as a coordination point for substrate. Tyrosine 179 acts as the Proton acceptor in catalysis.

It belongs to the short-chain dehydrogenases/reductases (SDR) family.

The polypeptide is Short-chain type dehydrogenase/reductase (Picea abies (Norway spruce)).